The primary structure comprises 344 residues: Ribosomal RNA small subunit methyltransferase H 2 (344 aa).

S-adenosyl-L-methionine is bound by residues 78–80 (GGH), Asp98, Phe131, Asp145, and Gln152.

It belongs to the methyltransferase superfamily. RsmH family.

Its subcellular location is the cytoplasm. It carries out the reaction cytidine(1402) in 16S rRNA + S-adenosyl-L-methionine = N(4)-methylcytidine(1402) in 16S rRNA + S-adenosyl-L-homocysteine + H(+). In terms of biological role, specifically methylates the N4 position of cytidine in position 1402 (C1402) of 16S rRNA. This chain is Ribosomal RNA small subunit methyltransferase H 2, found in Acholeplasma laidlawii (strain PG-8A).